A 441-amino-acid polypeptide reads, in one-letter code: ATP-dependent RNA helicase SUB2-1 (441 aa).

The segment covering Met1–Ile19 has biased composition (acidic residues). Residues Met1–Glu46 form a disordered region. Residues Thr57–Gln85 carry the Q motif motif. Residues Ile88–Ile263 form the Helicase ATP-binding domain. Ala101–Thr108 provides a ligand contact to ATP. Positions Asp210–Asp213 match the DECD box motif. Residues Lys291 to Ser436 enclose the Helicase C-terminal domain.

The protein belongs to the DEAD box helicase family. DECD subfamily.

The protein resides in the nucleus. It carries out the reaction ATP + H2O = ADP + phosphate + H(+). Its function is as follows. ATP-binding RNA helicase involved in transcription elongation and required for the export of mRNA out of the nucleus. SUB2 also plays a role in pre-mRNA splicing and spliceosome assembly. May be involved in rDNA and telomeric silencing, and maintenance of genome integrity. The sequence is that of ATP-dependent RNA helicase SUB2-1 (SUB2-1) from Vanderwaltozyma polyspora (strain ATCC 22028 / DSM 70294 / BCRC 21397 / CBS 2163 / NBRC 10782 / NRRL Y-8283 / UCD 57-17) (Kluyveromyces polysporus).